A 538-amino-acid chain; its full sequence is NADH-quinone oxidoreductase subunit N (538 aa).

Transmembrane regions (helical) follow at residues 12–32 (IAYG…VSVL), 47–67 (LALA…LSGS), 81–101 (PTLY…VVMA), 144–164 (GITQ…MMLF), 170–190 (LLTM…MCAL), 205–225 (YFLL…FVYG), 248–268 (FLLL…GAVP), 294–314 (IAAF…ITTD), 317–337 (PVLW…AVTQ), 343–363 (MLAY…AAAN), 371–391 (LFYL…AGLV), 423–443 (APVL…IPLT), 472–492 (SAIA…ADPV), and 502–522 (GPAV…LGVA).

The protein belongs to the complex I subunit 2 family. As to quaternary structure, NDH-1 is composed of 14 different subunits. Subunits NuoA, H, J, K, L, M, N constitute the membrane sector of the complex.

The protein localises to the cell membrane. The catalysed reaction is a quinone + NADH + 5 H(+)(in) = a quinol + NAD(+) + 4 H(+)(out). In terms of biological role, NDH-1 shuttles electrons from NADH, via FMN and iron-sulfur (Fe-S) centers, to quinones in the respiratory chain. The immediate electron acceptor for the enzyme in this species is believed to be a menaquinone. Couples the redox reaction to proton translocation (for every two electrons transferred, four hydrogen ions are translocated across the cytoplasmic membrane), and thus conserves the redox energy in a proton gradient. In Mycobacteroides abscessus (strain ATCC 19977 / DSM 44196 / CCUG 20993 / CIP 104536 / JCM 13569 / NCTC 13031 / TMC 1543 / L948) (Mycobacterium abscessus), this protein is NADH-quinone oxidoreductase subunit N.